A 127-amino-acid chain; its full sequence is Holo-[acyl-carrier-protein] synthase (127 aa).

Mg(2+) is bound by residues aspartate 7 and glutamate 53.

This sequence belongs to the P-Pant transferase superfamily. AcpS family. Mg(2+) serves as cofactor.

The protein resides in the cytoplasm. The enzyme catalyses apo-[ACP] + CoA = holo-[ACP] + adenosine 3',5'-bisphosphate + H(+). Its function is as follows. Transfers the 4'-phosphopantetheine moiety from coenzyme A to a Ser of acyl-carrier-protein. In Herpetosiphon aurantiacus (strain ATCC 23779 / DSM 785 / 114-95), this protein is Holo-[acyl-carrier-protein] synthase.